A 448-amino-acid chain; its full sequence is uncharacterized protein (448 aa).

Basic and acidic residues predominate over residues 187–198 (SKGDRGDADDRG). Disordered stretches follow at residues 187–221 (SKGD…LPTR), 243–270 (LQVP…GATM), and 291–361 (LSGL…LPNG). Over residues 243 to 261 (LQVPGGTSAAIPSASSTPS) the composition is skewed to low complexity. A compositionally biased stretch (basic and acidic residues) spans 307–334 (FDERGQEVRDPADYEHSNEPDERRADDR).

To M.tuberculosis Rv0025 and Rv0739.

This is an uncharacterized protein from Mycobacterium tuberculosis (strain ATCC 25618 / H37Rv).